The primary structure comprises 142 residues: Large ribosomal subunit protein bL17 (142 aa).

It belongs to the bacterial ribosomal protein bL17 family. In terms of assembly, part of the 50S ribosomal subunit. Contacts protein L32.

The polypeptide is Large ribosomal subunit protein bL17 (Bartonella henselae (strain ATCC 49882 / DSM 28221 / CCUG 30454 / Houston 1) (Rochalimaea henselae)).